The chain runs to 104 residues: UPF0145 protein STH1265 (104 aa).

This sequence belongs to the UPF0145 family.

In Symbiobacterium thermophilum (strain DSM 24528 / JCM 14929 / IAM 14863 / T), this protein is UPF0145 protein STH1265.